The following is a 421-amino-acid chain: UDP-N-acetylglucosamine 1-carboxyvinyltransferase 1 (421 aa).

Residue Lys-22 to Asn-23 coordinates phosphoenolpyruvate. UDP-N-acetyl-alpha-D-glucosamine is bound at residue Arg-95. Cys-119 (proton donor) is an active-site residue. The residue at position 119 (Cys-119) is a 2-(S-cysteinyl)pyruvic acid O-phosphothioketal. Residues Arg-124–Gln-128, Asp-308, and Val-330 contribute to the UDP-N-acetyl-alpha-D-glucosamine site.

The protein belongs to the EPSP synthase family. MurA subfamily.

It is found in the cytoplasm. The catalysed reaction is phosphoenolpyruvate + UDP-N-acetyl-alpha-D-glucosamine = UDP-N-acetyl-3-O-(1-carboxyvinyl)-alpha-D-glucosamine + phosphate. The protein operates within cell wall biogenesis; peptidoglycan biosynthesis. Its function is as follows. Cell wall formation. Adds enolpyruvyl to UDP-N-acetylglucosamine. This chain is UDP-N-acetylglucosamine 1-carboxyvinyltransferase 1, found in Staphylococcus aureus (strain bovine RF122 / ET3-1).